We begin with the raw amino-acid sequence, 254 residues long: NAD kinase (254 aa).

The Proton acceptor role is filled by Asp44. Residues 44–45, 114–115, Asp144, Ala152, 155–160, and Ala179 each bind NAD(+); these read DG, NE, and TAYNYS.

It belongs to the NAD kinase family. Requires a divalent metal cation as cofactor.

The protein resides in the cytoplasm. The enzyme catalyses NAD(+) + ATP = ADP + NADP(+) + H(+). Functionally, involved in the regulation of the intracellular balance of NAD and NADP, and is a key enzyme in the biosynthesis of NADP. Catalyzes specifically the phosphorylation on 2'-hydroxyl of the adenosine moiety of NAD to yield NADP. The sequence is that of NAD kinase from Cereibacter sphaeroides (strain ATCC 17029 / ATH 2.4.9) (Rhodobacter sphaeroides).